We begin with the raw amino-acid sequence, 334 residues long: D-alanine--D-alanine ligase (334 aa).

Residues 114–314 (KRIWRFEGLP…YEELCLRILA (201 aa)) enclose the ATP-grasp domain. Residue 140–195 (LEDLGSPMIVKPSREGSTIGLTKVTSPGQCEQAYRLASRYDPEVLCEQFIEGEETT) participates in ATP binding. The Mg(2+) site is built by aspartate 267, glutamate 281, and asparagine 283.

Belongs to the D-alanine--D-alanine ligase family. Requires Mg(2+) as cofactor. It depends on Mn(2+) as a cofactor.

Its subcellular location is the cytoplasm. The catalysed reaction is 2 D-alanine + ATP = D-alanyl-D-alanine + ADP + phosphate + H(+). Its pathway is cell wall biogenesis; peptidoglycan biosynthesis. Functionally, cell wall formation. The protein is D-alanine--D-alanine ligase of Paracidovorax citrulli (strain AAC00-1) (Acidovorax citrulli).